The sequence spans 443 residues: ATP-dependent protease ATPase subunit HslU (443 aa).

ATP contacts are provided by residues isoleucine 18 and glycine 60 to glutamate 65. Residues proline 138–phenylalanine 158 form a disordered region. A compositionally biased stretch (basic and acidic residues) spans tryptophan 143–threonine 154. Residues aspartate 255, glutamate 321, and arginine 393 each coordinate ATP.

Belongs to the ClpX chaperone family. HslU subfamily. In terms of assembly, a double ring-shaped homohexamer of HslV is capped on each side by a ring-shaped HslU homohexamer. The assembly of the HslU/HslV complex is dependent on binding of ATP.

It is found in the cytoplasm. Functionally, ATPase subunit of a proteasome-like degradation complex; this subunit has chaperone activity. The binding of ATP and its subsequent hydrolysis by HslU are essential for unfolding of protein substrates subsequently hydrolyzed by HslV. HslU recognizes the N-terminal part of its protein substrates and unfolds these before they are guided to HslV for hydrolysis. The polypeptide is ATP-dependent protease ATPase subunit HslU (Pseudoalteromonas atlantica (strain T6c / ATCC BAA-1087)).